A 68-amino-acid polypeptide reads, in one-letter code: Large ribosomal subunit protein uL29 (68 aa).

It belongs to the universal ribosomal protein uL29 family.

The polypeptide is Large ribosomal subunit protein uL29 (Streptococcus agalactiae serotype Ia (strain ATCC 27591 / A909 / CDC SS700)).